Reading from the N-terminus, the 579-residue chain is ATP-dependent RNA helicase SUV3, mitochondrial (579 aa).

The N-terminal 59 residues, 1–59 (MAVAAALLRRRALYSALASPSWLHDTSSCYICSISGTHSLVNHPNLRLQRGYHNSGKFD), are a transit peptide targeting the mitochondrion. One can recognise a Helicase ATP-binding domain in the interval 72–213 (NAREKKRNVF…QRILEPTGDV (142 aa)). Position 85–92 (85–92 (GPTNSGKT)) interacts with ATP. Residues 214–388 (VTVQYYERLS…GLFPTFDVLS (175 aa)) enclose the Helicase C-terminal domain. A glycan (N-linked (GlcNAc...) asparagine) is linked at N309.

This sequence belongs to the helicase family. As to quaternary structure, homodimer; in free form. Component of the mitochondrial degradosome (mtEXO) complex which is a heteropentamer containing 2 copies of SUPV3L1 and 3 copies of PNPT1. It depends on Mg(2+) as a cofactor. Requires Mn(2+) as cofactor.

The protein resides in the nucleus. Its subcellular location is the mitochondrion matrix. It localises to the mitochondrion nucleoid. It catalyses the reaction ATP + H2O = ADP + phosphate + H(+). Its function is as follows. Major helicase player in mitochondrial RNA metabolism. Component of the mitochondrial degradosome (mtEXO) complex, that degrades 3' overhang double-stranded RNA with a 3'-to-5' directionality in an ATP-dependent manner. ATPase and ATP-dependent multisubstrate helicase, able to unwind double-stranded (ds) DNA and RNA, and RNA/DNA heteroduplexes in the 5'-to-3' direction. Plays a role in the RNA surveillance system in mitochondria; regulates the stability of mature mRNAs, the removal of aberrantly formed mRNAs and the rapid degradation of non coding processing intermediates. Confers salinity and drought stress tolerances by maintaining both photosynthesis and antioxidant machinery, probably via an increase in plant hormones levels such as gibberellic acid (GA(3)), the cytokinin zeatin (Z) and indole-3-acetic acid (IAA). In Oryza sativa subsp. japonica (Rice), this protein is ATP-dependent RNA helicase SUV3, mitochondrial.